The sequence spans 212 residues: Probable GTP-binding protein EngB (212 aa).

The region spanning 38 to 210 is the EngB-type G domain; the sequence is SLPEIAFVGK…KASLAKCIKP (173 aa). Residues 46-53, 73-77, 91-94, 158-161, and 189-191 each bind GTP; these read GKSNVGKS, GRTRQ, DLPG, TKSD, and VSN. Mg(2+) is bound by residues S53 and T75.

This sequence belongs to the TRAFAC class TrmE-Era-EngA-EngB-Septin-like GTPase superfamily. EngB GTPase family. Mg(2+) serves as cofactor.

Functionally, necessary for normal cell division and for the maintenance of normal septation. The sequence is that of Probable GTP-binding protein EngB from Rickettsia africae (strain ESF-5).